We begin with the raw amino-acid sequence, 265 residues long: uncharacterized protein (265 aa).

CBS domains follow at residues 9 to 64 (MTKK…EKVE) and 67 to 126 (MTKR…TTPK).

This is an uncharacterized protein from Methanocaldococcus jannaschii (strain ATCC 43067 / DSM 2661 / JAL-1 / JCM 10045 / NBRC 100440) (Methanococcus jannaschii).